The sequence spans 306 residues: Protoheme IX farnesyltransferase (306 aa).

Transmembrane regions (helical) follow at residues 31–50 (VIEL…QGGW), 55–77 (LILG…NCYI), 104–124 (LVFA…ISNW), 125–145 (LAAA…TLWL), 168–188 (WAAV…IVFL), 218–235 (GRAA…ATLA), 238–258 (LLLI…LAGG), and 286–306 (ASIS…LLPF).

Belongs to the UbiA prenyltransferase family. Protoheme IX farnesyltransferase subfamily.

The protein resides in the cell membrane. It catalyses the reaction heme b + (2E,6E)-farnesyl diphosphate + H2O = Fe(II)-heme o + diphosphate. The protein operates within porphyrin-containing compound metabolism; heme O biosynthesis; heme O from protoheme: step 1/1. Converts heme B (protoheme IX) to heme O by substitution of the vinyl group on carbon 2 of heme B porphyrin ring with a hydroxyethyl farnesyl side group. The polypeptide is Protoheme IX farnesyltransferase (Clavibacter michiganensis subsp. michiganensis (strain NCPPB 382)).